Reading from the N-terminus, the 503-residue chain is Lysine--tRNA ligase (503 aa).

Residues E410 and E417 each coordinate Mg(2+).

The protein belongs to the class-II aminoacyl-tRNA synthetase family. Homodimer. It depends on Mg(2+) as a cofactor.

Its subcellular location is the cytoplasm. The enzyme catalyses tRNA(Lys) + L-lysine + ATP = L-lysyl-tRNA(Lys) + AMP + diphosphate. This is Lysine--tRNA ligase from Prochlorococcus marinus (strain MIT 9211).